Reading from the N-terminus, the 402-residue chain is CCA-adding enzyme (402 aa).

ATP is bound by residues Gly32 and Arg35. Gly32 and Arg35 together coordinate CTP. Mg(2+) is bound by residues Asp45 and Asp47. ATP-binding residues include Arg116, Asp159, Arg162, Arg165, and Arg168. CTP contacts are provided by Arg116, Asp159, Arg162, Arg165, and Arg168.

It belongs to the tRNA nucleotidyltransferase/poly(A) polymerase family. Bacterial CCA-adding enzyme type 3 subfamily. In terms of assembly, homodimer. It depends on Mg(2+) as a cofactor.

It carries out the reaction a tRNA precursor + 2 CTP + ATP = a tRNA with a 3' CCA end + 3 diphosphate. The catalysed reaction is a tRNA with a 3' CCA end + 2 CTP + ATP = a tRNA with a 3' CCACCA end + 3 diphosphate. In terms of biological role, catalyzes the addition and repair of the essential 3'-terminal CCA sequence in tRNAs without using a nucleic acid template. Adds these three nucleotides in the order of C, C, and A to the tRNA nucleotide-73, using CTP and ATP as substrates and producing inorganic pyrophosphate. tRNA 3'-terminal CCA addition is required both for tRNA processing and repair. Also involved in tRNA surveillance by mediating tandem CCA addition to generate a CCACCA at the 3' terminus of unstable tRNAs. While stable tRNAs receive only 3'-terminal CCA, unstable tRNAs are marked with CCACCA and rapidly degraded. The protein is CCA-adding enzyme of Streptococcus thermophilus (strain CNRZ 1066).